The sequence spans 643 residues: Zinc finger protein 23 (643 aa).

Residues 1 to 43 (MLENYGNVASLGFPLLKPAVISQLEGGSELGGSSPLAAGTGLQ) form the KRAB domain. Residue Lys157 forms a Glycyl lysine isopeptide (Lys-Gly) (interchain with G-Cter in SUMO2) linkage. Residues 168 to 190 (FKCEELVEPFRCDSQLIQHQENN) form a C2H2-type 1; degenerate zinc finger. 16 consecutive C2H2-type zinc fingers follow at residues 196-218 (YQCSECGKAFSINEKLIWHQRLH), 224-246 (FKCVECGKSFSYSSHYITHQTIH), 252-274 (YQCKMCGKAFSVNGSLSRHQRIH), 280-302 (YQCKECGNGFSCSSAYITHQRVH), 308-330 (YECNDCGKAFNVNAKLIQHQRIH), 336-358 (YECNECGKGFRCSSQLRQHQSIH), 364-386 (YQCKECGKGFNNNTKLIQHQRIH), 392-414 (YECTECGKAFSVKGKLIQHQRIH), 420-442 (YECNECGKAFRCNSQFRQHLRIH), 448-470 (YECNECGKAFSVNGKLMRHQRIH), 476-498 (FECNECGRCFTSKRNLLDHHRIH), 504-526 (YQCKECGKAFSINAKLTRHQRIH), 532-554 (FKCMECEKAFSCSSNYIVHQRIH), 560-582 (FQCKECGKAFHVNAHLIRHQRSH), 588-610 (FRCVECGKGFSFSSDYIIHQTVH), and 616-638 (YMCSVCGKAFRFSFQLSQHQSVH).

Belongs to the krueppel C2H2-type zinc-finger protein family.

It is found in the nucleus. Functionally, may be involved in transcriptional regulation. May have a role in embryonic development. This chain is Zinc finger protein 23 (ZNF23), found in Homo sapiens (Human).